A 437-amino-acid polypeptide reads, in one-letter code: Kynureninase (437 aa).

Pyridoxal 5'-phosphate is bound by residues Leu-99, Thr-100, 127–130, Ser-183, Asp-212, His-215, and Tyr-237; that span reads FPSD. Residue Lys-238 is modified to N6-(pyridoxal phosphate)lysine. Positions 267 and 295 each coordinate pyridoxal 5'-phosphate.

It belongs to the kynureninase family. In terms of assembly, homodimer. The cofactor is pyridoxal 5'-phosphate.

The protein localises to the cytoplasm. It carries out the reaction L-kynurenine + H2O = anthranilate + L-alanine + H(+). The catalysed reaction is 3-hydroxy-L-kynurenine + H2O = 3-hydroxyanthranilate + L-alanine + H(+). It participates in amino-acid degradation; L-kynurenine degradation; L-alanine and anthranilate from L-kynurenine: step 1/1. It functions in the pathway cofactor biosynthesis; NAD(+) biosynthesis; quinolinate from L-kynurenine: step 2/3. In terms of biological role, catalyzes the cleavage of L-kynurenine (L-Kyn) and L-3-hydroxykynurenine (L-3OHKyn) into anthranilic acid (AA) and 3-hydroxyanthranilic acid (3-OHAA), respectively. The protein is Kynureninase of Yarrowia lipolytica (strain CLIB 122 / E 150) (Yeast).